The sequence spans 89 residues: Putative regulatory protein CLH_1161 (89 aa).

The protein belongs to the RemA family.

The sequence is that of Putative regulatory protein CLH_1161 from Clostridium botulinum (strain Alaska E43 / Type E3).